The primary structure comprises 131 residues: MAEKVIYRGTGRRKTSVAQVILTPGKGNIIVNGVPALEFFPYPTLVQDLEQPLVATGTEKDFDITVTVKGGGFTGQAGATRLGIARALLVASEDYRKGLRAVGLLTRDARIKERKKYGLRGARRAPQYSKR.

The protein belongs to the universal ribosomal protein uS9 family.

The protein is Small ribosomal subunit protein uS9 of Mesoplasma florum (strain ATCC 33453 / NBRC 100688 / NCTC 11704 / L1) (Acholeplasma florum).